The chain runs to 489 residues: Cysteine--tRNA ligase (489 aa).

Residue Cys-29 coordinates Zn(2+). A 'HIGH' region motif is present at residues 31-41; that stretch reads VTVYDYCHLGH. Residues Cys-215, His-240, and Glu-244 each coordinate Zn(2+). The 'KMSKS' region motif lies at 272-276; that stretch reads KMSKS. Lys-275 serves as a coordination point for ATP.

It belongs to the class-I aminoacyl-tRNA synthetase family. Monomer. It depends on Zn(2+) as a cofactor.

It localises to the cytoplasm. It catalyses the reaction tRNA(Cys) + L-cysteine + ATP = L-cysteinyl-tRNA(Cys) + AMP + diphosphate. This Trichodesmium erythraeum (strain IMS101) protein is Cysteine--tRNA ligase.